The primary structure comprises 252 residues: Uridylate kinase (252 aa).

Lys20–Gly23 is a binding site for ATP. An involved in allosteric activation by GTP region spans residues Gly28–Gly33. UMP is bound at residue Gly62. 2 residues coordinate ATP: Gly63 and Arg67. UMP contacts are provided by residues Asp82 and Met143–Thr150. Asn171, Tyr177, and Asp180 together coordinate ATP.

This sequence belongs to the UMP kinase family. In terms of assembly, homohexamer.

It is found in the cytoplasm. It catalyses the reaction UMP + ATP = UDP + ADP. The protein operates within pyrimidine metabolism; CTP biosynthesis via de novo pathway; UDP from UMP (UMPK route): step 1/1. Its activity is regulated as follows. Allosterically activated by GTP. Inhibited by UTP. Its function is as follows. Catalyzes the reversible phosphorylation of UMP to UDP. The sequence is that of Uridylate kinase from Streptomyces avermitilis (strain ATCC 31267 / DSM 46492 / JCM 5070 / NBRC 14893 / NCIMB 12804 / NRRL 8165 / MA-4680).